A 91-amino-acid polypeptide reads, in one-letter code: Probable Fe(2+)-trafficking protein (91 aa).

The protein belongs to the Fe(2+)-trafficking protein family. As to quaternary structure, monomer.

Functionally, could be a mediator in iron transactions between iron acquisition and iron-requiring processes, such as synthesis and/or repair of Fe-S clusters in biosynthetic enzymes. In Klebsiella pneumoniae (strain 342), this protein is Probable Fe(2+)-trafficking protein.